The sequence spans 1141 residues: Eukaryotic translation initiation factor 3 subunit A (1141 aa).

Positions 319-501 (LQRMAAHVLL…NSIYFGTDLT (183 aa)) constitute a PCI domain. Basic and acidic residues-rich tracts occupy residues 588–623 (QNNAREEEEARRQEEESRKAKLAEQKRLEQEQEERE) and 829–899 (AAEE…RGGD). 2 disordered regions span residues 588 to 631 (QNNA…QNEI) and 829 to 1141 (AAEE…VKRR). The residue at position 908 (serine 908) is a Phosphoserine. 4 stretches are compositionally biased toward basic and acidic residues: residues 920–976 (ERND…EPDT), 990–1051 (SRDD…EPQR), 1059–1087 (DAPRHADRENRRPAGERRDRDVRETRGDQ), and 1110–1131 (TREEKPAAKRDQAQEKENKAGD).

The protein belongs to the eIF-3 subunit A family. As to quaternary structure, component of the eukaryotic translation initiation factor 3 (eIF-3) complex. The eIF-3 complex interacts with pix.

It localises to the cytoplasm. Its function is as follows. RNA-binding component of the eukaryotic translation initiation factor 3 (eIF-3) complex, which is involved in protein synthesis of a specialized repertoire of mRNAs and, together with other initiation factors, stimulates binding of mRNA and methionyl-tRNAi to the 40S ribosome. The eIF-3 complex specifically targets and initiates translation of a subset of mRNAs involved in cell proliferation. The protein is Eukaryotic translation initiation factor 3 subunit A of Drosophila sechellia (Fruit fly).